The primary structure comprises 325 residues: Tetraacyldisaccharide 4'-kinase (325 aa).

55–62 (TAGGNGKT) provides a ligand contact to ATP.

This sequence belongs to the LpxK family.

The enzyme catalyses a lipid A disaccharide + ATP = a lipid IVA + ADP + H(+). The protein operates within glycolipid biosynthesis; lipid IV(A) biosynthesis; lipid IV(A) from (3R)-3-hydroxytetradecanoyl-[acyl-carrier-protein] and UDP-N-acetyl-alpha-D-glucosamine: step 6/6. Its function is as follows. Transfers the gamma-phosphate of ATP to the 4'-position of a tetraacyldisaccharide 1-phosphate intermediate (termed DS-1-P) to form tetraacyldisaccharide 1,4'-bis-phosphate (lipid IVA). The sequence is that of Tetraacyldisaccharide 4'-kinase from Salmonella heidelberg (strain SL476).